A 432-amino-acid chain; its full sequence is Fibroleukin (432 aa).

The N-terminal stretch at 1–19 (MRLPGWLWLSSAVLAACRA) is a signal peptide. Residue N24 is glycosylated (N-linked (GlcNAc...) asparagine). Positions 71-157 (GSMEEVLKEV…QGRLETLHLV (87 aa)) form a coiled coil. The disordered stretch occupies residues 100–122 (QADDHRDPGGNGGNGAETAEDSR). N-linked (GlcNAc...) asparagine glycosylation is found at N172, N228, N256, and N329. Residues 197 to 429 (PVQHLIYKDC…QAKMMIRPKN (233 aa)) form the Fibrinogen C-terminal domain. A disulfide bond links C206 and C235. Residues C364 and C377 are joined by a disulfide bond.

As to quaternary structure, homotetramer; disulfide-linked. As to expression, constitutively expressed in cytotoxic T-cells.

Its subcellular location is the secreted. Converts prothrombin to thrombin. This Mus musculus (Mouse) protein is Fibroleukin (Fgl2).